Reading from the N-terminus, the 375-residue chain is Alcohol dehydrogenase 1 (375 aa).

Ala1 carries the N-acetylalanine modification. Positions 46, 68, 98, 101, 104, 112, and 175 each coordinate Zn(2+). Residues 200 to 205 (GLGGVG), Asp224, Lys229, 293 to 295 (VGL), and Arg370 contribute to the NAD(+) site.

It belongs to the zinc-containing alcohol dehydrogenase family. Class-I subfamily. Requires Zn(2+) as cofactor.

It localises to the cytoplasm. It carries out the reaction a primary alcohol + NAD(+) = an aldehyde + NADH + H(+). The enzyme catalyses a secondary alcohol + NAD(+) = a ketone + NADH + H(+). The sequence is that of Alcohol dehydrogenase 1 from Pelophylax perezi (Perez's frog).